The primary structure comprises 530 residues: B3 domain-containing protein REM-like 3 (530 aa).

DNA-binding regions (TF-B3) lie at residues Lys11–Ser103 and Asp144–Glu241. The interval Ser251–Lys276 is disordered. The span at Val254–Lys276 shows a compositional bias: basic and acidic residues. DNA-binding regions (TF-B3) lie at residues Asn296–Glu393 and Ser431–Lys530.

The protein localises to the nucleus. This chain is B3 domain-containing protein REM-like 3, found in Arabidopsis thaliana (Mouse-ear cress).